A 321-amino-acid chain; its full sequence is Glycerol-3-phosphate dehydrogenase [NAD(P)+] (321 aa).

NADPH-binding residues include S10, F11, R31, R32, and K104. K104 and G132 together coordinate sn-glycerol 3-phosphate. An NADPH-binding site is contributed by A136. 5 residues coordinate sn-glycerol 3-phosphate: K186, D238, S248, R249, and N250. K186 (proton acceptor) is an active-site residue. NADPH is bound at residue R249. E272 contributes to the NADPH binding site.

Belongs to the NAD-dependent glycerol-3-phosphate dehydrogenase family.

Its subcellular location is the cytoplasm. The catalysed reaction is sn-glycerol 3-phosphate + NAD(+) = dihydroxyacetone phosphate + NADH + H(+). It carries out the reaction sn-glycerol 3-phosphate + NADP(+) = dihydroxyacetone phosphate + NADPH + H(+). Functionally, catalyzes the reduction of the glycolytic intermediate dihydroxyacetone phosphate (DHAP) to sn-glycerol 3-phosphate (G3P). The chain is Glycerol-3-phosphate dehydrogenase [NAD(P)+] from Methanothermobacter thermautotrophicus (strain ATCC 29096 / DSM 1053 / JCM 10044 / NBRC 100330 / Delta H) (Methanobacterium thermoautotrophicum).